Reading from the N-terminus, the 366-residue chain is Histidinol-phosphate aminotransferase 2 (366 aa).

Positions 1 to 11 (MQVKDQLSSLQ) are enriched in polar residues. The disordered stretch occupies residues 1-21 (MQVKDQLSSLQPYKPGKSPEQ). Residue lysine 222 is modified to N6-(pyridoxal phosphate)lysine.

It belongs to the class-II pyridoxal-phosphate-dependent aminotransferase family. Histidinol-phosphate aminotransferase subfamily. As to quaternary structure, homodimer. The cofactor is pyridoxal 5'-phosphate.

The catalysed reaction is L-histidinol phosphate + 2-oxoglutarate = 3-(imidazol-4-yl)-2-oxopropyl phosphate + L-glutamate. It functions in the pathway amino-acid biosynthesis; L-histidine biosynthesis; L-histidine from 5-phospho-alpha-D-ribose 1-diphosphate: step 7/9. This is Histidinol-phosphate aminotransferase 2 (hisC2) from Bacillus anthracis.